A 245-amino-acid chain; its full sequence is 1-(5-phosphoribosyl)-5-[(5-phosphoribosylamino)methylideneamino] imidazole-4-carboxamide isomerase (245 aa).

Aspartate 7 acts as the Proton acceptor in catalysis. The active-site Proton donor is the aspartate 129.

It belongs to the HisA/HisF family.

It is found in the cytoplasm. The catalysed reaction is 1-(5-phospho-beta-D-ribosyl)-5-[(5-phospho-beta-D-ribosylamino)methylideneamino]imidazole-4-carboxamide = 5-[(5-phospho-1-deoxy-D-ribulos-1-ylimino)methylamino]-1-(5-phospho-beta-D-ribosyl)imidazole-4-carboxamide. It functions in the pathway amino-acid biosynthesis; L-histidine biosynthesis; L-histidine from 5-phospho-alpha-D-ribose 1-diphosphate: step 4/9. In Shewanella frigidimarina (strain NCIMB 400), this protein is 1-(5-phosphoribosyl)-5-[(5-phosphoribosylamino)methylideneamino] imidazole-4-carboxamide isomerase.